A 313-amino-acid chain; its full sequence is WD repeat-containing protein 82 (313 aa).

WD repeat units lie at residues 19–58 (ENSD…PKRT), 105–144 (GHSK…CQGL), 146–184 (HLQG…KGPF), 192–231 (DRTC…VMHT), 236–276 (NNSK…KVAV), and 280–313 (KHTG…TIDD).

This sequence belongs to the WD repeat SWD2 family. In terms of assembly, component of the SET1/COMPASS complex. Component of the PNUTS-PP1 phosphatase complex.

It localises to the nucleus. The protein localises to the chromosome. It is found in the cytoplasm. Regulatory component of the SET1/COMPASS complex implicated in the tethering of this complex to transcriptional start sites of active genes. Facilitates histone H3 'Lys-4' methylation (H3K4me) via recruitment of the SETD1A or SETD1B to the 'Ser-5' phosphorylated C-terminal domain (CTD) of RNA polymerase II large subunit (POLR2A). Component of the PNUTS-PP1 protein phosphatase complex, a protein phosphatase 1 (PP1) complex that promotes RNA polymerase II transcription pause-release, allowing transcription elongation. This chain is WD repeat-containing protein 82 (wdr82), found in Xenopus tropicalis (Western clawed frog).